Reading from the N-terminus, the 164-residue chain is 2-C-methyl-D-erythritol 2,4-cyclodiphosphate synthase (164 aa).

A divalent metal cation is bound by residues Asp-8 and His-10. 4-CDP-2-C-methyl-D-erythritol 2-phosphate-binding positions include 8-10 (DVH) and 34-35 (HS). His-42 lines the a divalent metal cation pocket. 4-CDP-2-C-methyl-D-erythritol 2-phosphate contacts are provided by residues 56–58 (DIG), 132–135 (TTEE), Phe-139, and Lys-142.

Belongs to the IspF family. As to quaternary structure, homotrimer. A divalent metal cation serves as cofactor.

The enzyme catalyses 4-CDP-2-C-methyl-D-erythritol 2-phosphate = 2-C-methyl-D-erythritol 2,4-cyclic diphosphate + CMP. Its pathway is isoprenoid biosynthesis; isopentenyl diphosphate biosynthesis via DXP pathway; isopentenyl diphosphate from 1-deoxy-D-xylulose 5-phosphate: step 4/6. Involved in the biosynthesis of isopentenyl diphosphate (IPP) and dimethylallyl diphosphate (DMAPP), two major building blocks of isoprenoid compounds. Catalyzes the conversion of 4-diphosphocytidyl-2-C-methyl-D-erythritol 2-phosphate (CDP-ME2P) to 2-C-methyl-D-erythritol 2,4-cyclodiphosphate (ME-CPP) with a corresponding release of cytidine 5-monophosphate (CMP). This is 2-C-methyl-D-erythritol 2,4-cyclodiphosphate synthase from Clostridium kluyveri (strain NBRC 12016).